A 643-amino-acid polypeptide reads, in one-letter code: MSALRPPLIGSRSRNMNLKFRHKILLSACGVVVLAFALFTLYNDYLQRNTIRQNIEASVQQSGALTASSVQNWMSGRILVLENLAQDIGQQGAGDTLAGLIEQPSYTRNFLFTYLGQANGEFTQRPDAQMPAGYDPRQRPWYGAAANAGQTVLTAPYQGAVGGLMVTIATPVKSKRNGELIGVVGGDVTLDTLVEIINSVDFGGIGHAFLADANGQVIVSPNKDQVMKNLKDIYPGSNLRVAAGMQDVTLDGQDRIISFAPVAGLPSAQWYIGLSIDRDKAYAALSQFRTSAIIAMLIAVAAIAGLLGLLIPVLMSPLTTMGRAMRDIAEGEGDLTRRLAVQNKDEFGELATSFNRFVERIHASISEVSSATRLVHDLSEKVVSASNASIIGSEEQSMRTNSVAAAINELGAATQEIARNAADASQHASGASEQAHGGREVVEEAISAMTALSQRISESCAQIETLNASTDEIGKILDVIKGISQQTNLLALNAAIEAARAGEAGRGFAVVADEVRNLAHRTQESAEEIHRMITSLQVGSREAVHTMNTSQVSSEQTVQVANQAGERLASVTQRIGEIDGMNQSVATATEEQTAVVESLNLDITQINALNQQGVENLNETLRHCDQLAQQAGRLKQLVGSFRI.

The chain crosses the membrane as a helical span at residues 24–44; the sequence is ILLSACGVVVLAFALFTLYND. Positions 49 to 273 constitute a Cache domain; that stretch reads NTIRQNIEAS…GLPSAQWYIG (225 aa). The chain crosses the membrane as a helical span at residues 293–313; it reads IIAMLIAVAAIAGLLGLLIPV. One can recognise an HAMP domain in the interval 312–366; that stretch reads PVLMSPLTTMGRAMRDIAEGEGDLTRRLAVQNKDEFGELATSFNRFVERIHASIS. The region spanning 371 to 607 is the Methyl-accepting transducer domain; the sequence is ATRLVHDLSE…SLNLDITQIN (237 aa).

It belongs to the methyl-accepting chemotaxis (MCP) protein family.

It localises to the cell membrane. Chemotactic-signal transducers respond to changes in the concentration of attractants and repellents in the environment, transduce a signal from the outside to the inside of the cell, and facilitate sensory adaptation through the variation of the level of methylation. McpA is a chemoreceptor that binds to 12 different L-amino acids and mediates chemotaxis toward these amino acids. This is Methyl-accepting chemotaxis protein McpA from Pseudomonas putida (strain ATCC 47054 / DSM 6125 / CFBP 8728 / NCIMB 11950 / KT2440).